A 194-amino-acid chain; its full sequence is Probable GTP-binding protein EngB (194 aa).

The EngB-type G domain maps to Asp22 to Glu194. Residues Gly30 to Ser37, Gly57 to Thr61, Asp75 to Gly78, Thr142 to Asp145, and Phe174 to Ser176 contribute to the GTP site. The Mg(2+) site is built by Ser37 and Thr59.

The protein belongs to the TRAFAC class TrmE-Era-EngA-EngB-Septin-like GTPase superfamily. EngB GTPase family. Mg(2+) is required as a cofactor.

In terms of biological role, necessary for normal cell division and for the maintenance of normal septation. The chain is Probable GTP-binding protein EngB from Listeria innocua serovar 6a (strain ATCC BAA-680 / CLIP 11262).